The chain runs to 300 residues: MQSTLSQSPGSRFSQYMALTKPRVTQLAVFCAVIGMFLATPGMVPWHVLIGGTIGIWLLAGAAFAINCLVEQKIDAMMRRTAWRPSARGEITTPQILLFSAVLGSAGAWTLYTFTNPLTMWLTIATFVGYAVVYTLLLKPMTPQNIVIGGASGAMPPALGWAAVTGAVPGDAWILVLIIFVWTPPHFWVLALYRRKDYENAGLPMLPVTHGEKFTRLHILLYTVILFAVTLMPFISGMSGVVYLASAVLLGAVFLAYAWKIYRDYSDELARKAFRYSIVYLSLLFAALLVDHYARPLLGV.

Helical transmembrane passes span 24–44 (VTQL…PGMV), 46–66 (WHVL…AFAI), 94–114 (PQIL…LYTF), 118–138 (LTMW…TLLL), 146–166 (IVIG…AVTG), 172–192 (AWIL…VLAL), 224–244 (VILF…VVYL), and 278–298 (IVYL…RPLL).

The protein belongs to the UbiA prenyltransferase family. Protoheme IX farnesyltransferase subfamily.

It localises to the cell inner membrane. The enzyme catalyses heme b + (2E,6E)-farnesyl diphosphate + H2O = Fe(II)-heme o + diphosphate. The protein operates within porphyrin-containing compound metabolism; heme O biosynthesis; heme O from protoheme: step 1/1. In terms of biological role, converts heme B (protoheme IX) to heme O by substitution of the vinyl group on carbon 2 of heme B porphyrin ring with a hydroxyethyl farnesyl side group. The protein is Protoheme IX farnesyltransferase of Burkholderia ambifaria (strain MC40-6).